The following is a 138-amino-acid chain: Ribulose bisphosphate carboxylase small subunit (138 aa).

It belongs to the RuBisCO small chain family. As to quaternary structure, heterohexadecamer of 8 large and 8 small subunits.

The protein resides in the plastid. It is found in the chloroplast. RuBisCO catalyzes two reactions: the carboxylation of D-ribulose 1,5-bisphosphate, the primary event in carbon dioxide fixation, as well as the oxidative fragmentation of the pentose substrate in the photorespiration process. Both reactions occur simultaneously and in competition at the same active site. Although the small subunit is not catalytic it is essential for maximal activity. This Porphyridium aerugineum (Red microalga) protein is Ribulose bisphosphate carboxylase small subunit.